Here is a 398-residue protein sequence, read N- to C-terminus: Pentalenolactone synthase (398 aa).

Position 347 (Cys-347) interacts with heme.

It belongs to the cytochrome P450 family. It depends on heme as a cofactor.

It catalyses the reaction pentalenolactone F + 2 reduced [2Fe-2S]-[ferredoxin] + O2 + 2 H(+) = pentalenolactone + 2 oxidized [2Fe-2S]-[ferredoxin] + 2 H2O. It functions in the pathway antibiotic biosynthesis; pentalenolactone biosynthesis. Catalyzes the final step in the biosynthesis of the sesquiterpenoid antibiotic pentalenolactone by mediating the oxidative rearrangement of pentalenolactone F to pentalenolactone. This chain is Pentalenolactone synthase (penM), found in Streptomyces exfoliatus (Streptomyces hydrogenans).